A 479-amino-acid polypeptide reads, in one-letter code: Zinc metalloproteinase/disintegrin (479 aa).

An N-terminal signal peptide occupies residues 1–20; it reads MIQVLLVTICLAAFPYQGSS. A propeptide spanning residues 21 to 187 is cleaved from the precursor; sequence IILESGKVND…PIKKASQLIV (167 aa). Positions 193-390 constitute a Peptidase M12B domain; it reads RYMEIVIVVD…ENPPCILNKP (198 aa). Residues Glu196 and Asp280 each coordinate Ca(2+). 3 disulfides stabilise this stretch: Cys304/Cys385, Cys344/Cys369, and Cys346/Cys352. His329 contributes to the Zn(2+) binding site. Glu330 is a catalytic residue. Residues His333 and His339 each contribute to the Zn(2+) site. Cys385 and Asn388 together coordinate Ca(2+). A propeptide spanning residues 390 to 414 is cleaved from the precursor; sequence PLRTDTVSTPVSGNELLEAGKDYDR. The Disintegrin domain maps to 398–479; the sequence is TPVSGNELLE…ADCPRNPYHA (82 aa). 3 disulfide bridges follow: Cys435–Cys441, Cys440–Cys465, and Cys453–Cys472. Positions 457–459 match the Cell attachment site motif; the sequence is RGD.

This sequence belongs to the venom metalloproteinase (M12B) family. P-II subfamily. P-IIa sub-subfamily. Monomer. Zn(2+) serves as cofactor. As to expression, expressed by the venom gland.

The protein localises to the secreted. Snake venom metalloproteinase that impairs hemostasis in the envenomed animal. Its function is as follows. Inhibits platelet aggregation induced by ADP, thrombin, platelet-activating factor and collagen. Acts by inhibiting fibrinogen interaction with platelet receptors GPIIb/GPIIIa (ITGA2B/ITGB3). The chain is Zinc metalloproteinase/disintegrin from Deinagkistrodon acutus (Hundred-pace snake).